The sequence spans 405 residues: MNLALSLLHKRGFLKQCTSLKVLSDLMDREKIVFYAGVDATSSSLHIGHLIPFLAMMHLRQHGHMPIVLIGDSTAKIGDPSGKSEMRKILSSEEIGNNALLIKNQLQRITKFTSECFIHNSNWLDNLNYIEFLRDVGMHFSVNRMLSFETYKRRMDFGLSFIEFNYQLLQSYDYYMLNKIKNCRLQIGGDDQWGNIISGVDLIRKKNGSETFGLTFPLITRSDGKKMGKSEKGAVYLDSNLFSIYDFYQYFRNTSDSDVKTFLYLFTFLEEDEIELISNFKGNSLNKAKEILAFEITKIVHGEAEALKVQEASFAAFRGSGDRSNIPFFKFSFSSLKEEILLVDLMLDSKIVPSKSEGRRLIDSGGVYINGKRVESQSHLLTKKDFNNNEVELRVGKKKFLRIVI.

L-tyrosine is bound at residue Tyr35. Positions 40–49 (ATSSSLHIGH) match the 'HIGH' region motif. The L-tyrosine site is built by Tyr166 and Gln170. The 'KMSKS' region signature appears at 226-230 (KMGKS). Lys229 is an ATP binding site. The 66-residue stretch at 340–405 (ILLVDLMLDS…GKKKFLRIVI (66 aa)) folds into the S4 RNA-binding domain.

It belongs to the class-I aminoacyl-tRNA synthetase family. TyrS type 1 subfamily. In terms of assembly, homodimer.

The protein localises to the cytoplasm. It carries out the reaction tRNA(Tyr) + L-tyrosine + ATP = L-tyrosyl-tRNA(Tyr) + AMP + diphosphate + H(+). Functionally, catalyzes the attachment of tyrosine to tRNA(Tyr) in a two-step reaction: tyrosine is first activated by ATP to form Tyr-AMP and then transferred to the acceptor end of tRNA(Tyr). The chain is Tyrosine--tRNA ligase from Borreliella burgdorferi (strain ATCC 35210 / DSM 4680 / CIP 102532 / B31) (Borrelia burgdorferi).